The following is a 322-amino-acid chain: MLERAVTYKNNGQINIILNGQKQVLTNAEAEAEYQAALQKNEAKHGILKEIEKEMSALVGMEEMKRNIKEIYAWIFVNQKRAEQGLKVGKQALHMMFKGNPGTGKTTVARLIGKLFFEMNVLSKGHLIEAERADLVGEYIGHTAQKTRDLIKKSLGGILFIDEAYSLARGGEKDFGKEAIDTLVKHMEDKQHEFILILAGYSREMDHFLSLNPGLQSRFPISIDFPDYSVTQLMEIAKRMIDEREYQLSQEAEWKLKDYLMTVKSTTSPIKFSNGRFVRNVIEKSIRAQAMRLLMGDQYLKSDLMTIKSQDLSIKEEASGSA.

99-106 provides a ligand contact to ATP; it reads GNPGTGKT.

The protein belongs to the CbxX/CfxQ family.

The protein is Stage V sporulation protein K (spoVK) of Bacillus subtilis (strain 168).